We begin with the raw amino-acid sequence, 126 residues long: Class I hydrophobin 1 (126 aa).

Residues 1-16 (MQYMTIVAFLAATVAA) form the signal peptide. 4 disulfides stabilise this stretch: Cys38/Cys100, Cys46/Cys94, Cys47/Cys75, and Cys101/Cys119.

Belongs to the fungal hydrophobin family.

It is found in the secreted. Its subcellular location is the cell wall. Aerial growth, conidiation, and dispersal of filamentous fungi in the environment rely upon a capability of their secreting small amphipathic proteins called hydrophobins (HPBs) with low sequence identity. Class I can self-assemble into an outermost layer of rodlet bundles on aerial cell surfaces, conferring cellular hydrophobicity that supports fungal growth, development and dispersal; whereas Class II form highly ordered films at water-air interfaces through intermolecular interactions but contribute nothing to the rodlet structure. HYD1 and HYD2 are required for the structural integrity of the long aerial chains of microconidia. Does not seem to be important for the ability to cause seedling disease. This Gibberella moniliformis (Maize ear and stalk rot fungus) protein is Class I hydrophobin 1.